Consider the following 354-residue polypeptide: Ornithine carbamoyltransferase, catabolic (354 aa).

Residues 67 to 70 (STRT), Gln-94, Arg-118, and 145 to 148 (HPTQ) contribute to the carbamoyl phosphate site. L-ornithine contacts are provided by residues Asn-177, Asp-241, and 245–246 (SM). Residues 284–285 (CL) and Arg-329 contribute to the carbamoyl phosphate site.

Belongs to the aspartate/ornithine carbamoyltransferase superfamily. OTCase family.

Its subcellular location is the cytoplasm. The catalysed reaction is carbamoyl phosphate + L-ornithine = L-citrulline + phosphate + H(+). It functions in the pathway amino-acid degradation; L-arginine degradation via ADI pathway; carbamoyl phosphate from L-arginine: step 2/2. Its function is as follows. Reversibly catalyzes the transfer of the carbamoyl group from carbamoyl phosphate (CP) to the N(epsilon) atom of ornithine (ORN) to produce L-citrulline. The polypeptide is Ornithine carbamoyltransferase, catabolic (arcB) (Lactococcus lactis subsp. cremoris (strain MG1363)).